A 262-amino-acid polypeptide reads, in one-letter code: Phycoerythrobilin:ferredoxin oxidoreductase (262 aa).

The protein belongs to the HY2 family.

The catalysed reaction is (3Z)-phycoerythrobilin + oxidized 2[4Fe-4S]-[ferredoxin] = 15,16-dihydrobiliverdin + reduced 2[4Fe-4S]-[ferredoxin] + 2 H(+). Its function is as follows. Catalyzes the two-electron reduction of the C2 and C3(1) diene system of 15,16-dihydrobiliverdin. This is Phycoerythrobilin:ferredoxin oxidoreductase (pebB) from Parasynechococcus marenigrum (strain WH8102).